A 463-amino-acid polypeptide reads, in one-letter code: NF-kappa-B-activating protein (463 aa).

Basic residues predominate over residues 1–14; sequence MRSRSRSRSRQRER. Positions 1–358 are disordered; it reads MRSRSRSRSR…GGSLNQKDFG (358 aa). 2 stretches are compositionally biased toward basic and acidic residues: residues 15-29 and 39-71; these read RRSD…ERRT and VSRE…DAVP. The segment covering 78 to 98 has biased composition (low complexity); it reads SSPSRSSSSSSSDRSSSSRSP. A compositionally biased stretch (basic and acidic residues) spans 107 to 125; that stretch reads KSVERWPNDRYHENNDRRQ. Phosphoserine occurs at positions 136, 189, and 191. At threonine 195 the chain carries Phosphothreonine. Basic residues predominate over residues 208 to 238; sequence PKKKKKKGKRKHKKSEKKSKKKSKKSKKKKS. Residues 241-267 are compositionally biased toward low complexity; that stretch reads ESSSSSSSSSSEDSSDESSSSSSSSSS. Over residues 268–278 the composition is skewed to acidic residues; that stretch reads DSEDESEEEDV. Over residues 279 to 288 the composition is skewed to basic and acidic residues; the sequence is WLEKTADGIK. A compositionally biased stretch (basic residues) spans 289-312; sequence KPKKKKSSTSKKDKKSKKKKKKRK. The segment covering 330 to 340 has biased composition (basic and acidic residues); that stretch reads KNKESASHNDE.

Belongs to the NKAP family.

It localises to the nucleus. Functionally, tumor suppressor involved in maintaining genome integrity. Influences gene expression and mRNA splicing. In Drosophila melanogaster (Fruit fly), this protein is NF-kappa-B-activating protein.